Consider the following 230-residue polypeptide: Ion-translocating oxidoreductase complex subunit E (230 aa).

Helical transmembrane passes span 11–31, 39–59, 69–89, 93–113, 132–152, and 182–202; these read GMWA…LLAV, LGLG…VSLV, IPVF…LMNA, GLYL…IIIG, FWMG…REII, and SFLL…LIAL.

It belongs to the NqrDE/RnfAE family. The complex is composed of six subunits: RnfA, RnfB, RnfC, RnfD, RnfE and RnfG.

The protein resides in the cell inner membrane. Functionally, part of a membrane-bound complex that couples electron transfer with translocation of ions across the membrane. In Vibrio atlanticus (strain LGP32) (Vibrio splendidus (strain Mel32)), this protein is Ion-translocating oxidoreductase complex subunit E.